Here is a 483-residue protein sequence, read N- to C-terminus: Teichuronic acid biosynthesis protein TuaB (483 aa).

11 helical membrane passes run 15 to 34 (TSIS…ALLG), 41 to 63 (EFGL…DMGF), 83 to 105 (WLNI…VIAG), 112 to 134 (LVFL…QYQY), 154 to 176 (VLSF…YVIS), 294 to 316 (LALV…ITAV), 321 to 343 (WLAA…LMNP), 356 to 378 (LAFY…AVQT), 382 to 404 (LTVA…WLLA), 411 to 433 (LSAY…IIAF), and 448 to 470 (MRLA…KAYP).

It belongs to the polysaccharide synthase family.

Its subcellular location is the cell membrane. Its pathway is cell wall biogenesis; teichuronic acid biosynthesis. In terms of biological role, might be involved in the translocation of teichuronic acid repeating units from the inner to the outer surface of the membrane. The polypeptide is Teichuronic acid biosynthesis protein TuaB (tuaB) (Bacillus subtilis (strain 168)).